Consider the following 363-residue polypeptide: Protein RecA (363 aa).

Position 79 to 86 (79 to 86 (GPESSGKT)) interacts with ATP.

It belongs to the RecA family.

It is found in the cytoplasm. Functionally, can catalyze the hydrolysis of ATP in the presence of single-stranded DNA, the ATP-dependent uptake of single-stranded DNA by duplex DNA, and the ATP-dependent hybridization of homologous single-stranded DNAs. It interacts with LexA causing its activation and leading to its autocatalytic cleavage. This is Protein RecA from Borrelia turicatae (strain 91E135).